A 350-amino-acid chain; its full sequence is S-adenosylmethionine:tRNA ribosyltransferase-isomerase (350 aa).

It belongs to the QueA family. As to quaternary structure, monomer.

The protein resides in the cytoplasm. It carries out the reaction 7-aminomethyl-7-carbaguanosine(34) in tRNA + S-adenosyl-L-methionine = epoxyqueuosine(34) in tRNA + adenine + L-methionine + 2 H(+). It functions in the pathway tRNA modification; tRNA-queuosine biosynthesis. In terms of biological role, transfers and isomerizes the ribose moiety from AdoMet to the 7-aminomethyl group of 7-deazaguanine (preQ1-tRNA) to give epoxyqueuosine (oQ-tRNA). The polypeptide is S-adenosylmethionine:tRNA ribosyltransferase-isomerase (Vibrio vulnificus (strain YJ016)).